The sequence spans 364 residues: Selenide, water dikinase (364 aa).

U25 is an active-site residue. A non-standard amino acid (selenocysteine) is located at residue U25. ATP-binding positions include K28, G46–D48, D66, D89, and G141–T143. D48 is a Mg(2+) binding site. D89 is a binding site for Mg(2+). A Mg(2+)-binding site is contributed by D244.

The protein belongs to the selenophosphate synthase 1 family. Class II subfamily. Homodimer. Requires Mg(2+) as cofactor.

The enzyme catalyses hydrogenselenide + ATP + H2O = selenophosphate + AMP + phosphate + 2 H(+). Its function is as follows. Synthesizes selenophosphate from selenide and ATP. The chain is Selenide, water dikinase (selD) from Dictyostelium discoideum (Social amoeba).